We begin with the raw amino-acid sequence, 1124 residues long: Transient-receptor-potential-like protein (1124 aa).

A disordered region spans residues 1-24 (MGRKKKLPTGVSSGVSHASSAPKS). Over 1–340 (MGRKKKLPTG…GFRRKSIVDK (340 aa)) the chain is Cytoplasmic. Over residues 10–21 (GVSSGVSHASSA) the composition is skewed to low complexity. ANK repeat units follow at residues 40–69 (LEEKKFLLAVERGDMPNVRRILQKALRHQH), 78–107 (LGRRALTLAIDNENLEMVELLVVMGVETKD), and 152–181 (PDITPLMLAAHKNNFEILRILLDRGAAVPV). The helical transmembrane segment at 341–361 (VICIAQVAVLFPLYCLIYMCA) threads the bilayer. Residues 362–373 (PNCRTGQLMRKP) are Extracellular-facing. Residues 374 to 394 (FMKFLIHASSYLFFLFILILV) traverse the membrane as a helical segment. Residues 395-431 (SQRADDDFVRIFGTTRMKKELAEQELRQRGQTPSKLE) lie on the Cytoplasmic side of the membrane. The helical transmembrane segment at 432-452 (LIVVMYVIGFVWEEVQEIFAV) threads the bilayer. Over 453 to 512 (GMKSYLRNMWNFIDFLRNSLYVSVMCLRAFAYIQQATEIARDPQMAYIPREKWHDFDPQL) the chain is Extracellular. The helical transmembrane segment at 513 to 533 (IAEGLFAAANVFSALKLVHLF) threads the bilayer. Topologically, residues 534–548 (SINPHLGPLQISLGR) are cytoplasmic. The helical transmembrane segment at 549 to 569 (MVIDIVKFFFIYTLVLFAFAC) threads the bilayer. Residues 570–645 (GLNQLLWYFA…GIKSYTRFWG (76 aa)) lie on the Extracellular side of the membrane. The chain crosses the membrane as a helical span at residues 646–666 (LLMFGSYSVINVIVLLNLLIA). Residues 667–1124 (MMSNSYAMID…TSPQRPKHRN (458 aa)) are Cytoplasmic-facing. Calmodulin-binding regions lie at residues 710 to 728 (SVKWVIRIFRKSSKTIDRQ) and 853 to 895 (IPSK…SQIG). Disordered stretches follow at residues 978–1013 (RAMAANNTRSLTAPELKISRKSSPAPTPTPTPGVSH) and 1031–1124 (LIAN…KHRN). The segment covering 1035-1063 (SAPSAPTAPPKKSAPTAPTPTYKPTTHAP) has biased composition (low complexity). 2 stretches are compositionally biased toward basic and acidic residues: residues 1069–1081 (GNRENTRASDGVR) and 1090–1106 (HVVDLDEKGGHLGRDNV). The span at 1107–1118 (SDISSIASTSPQ) shows a compositional bias: polar residues.

It belongs to the transient receptor (TC 1.A.4) family. STrpC subfamily. Forms heteromultimers with Trpgamma and, to a lower extent, with trp. Interacts with Fkbp59 in vivo and is found in the inaD signaling complex. In terms of tissue distribution, expressed predominantly in the rhabdomeres of photoreceptor cells.

It localises to the membrane. The protein localises to the cell projection. It is found in the rhabdomere membrane. A light-sensitive calcium channel that is required for inositide-mediated Ca(2+) entry in the retina during phospholipase C (PLC)-mediated phototransduction. Required for vision in the dark and in dim light. Binds calmodulin. Trp and trpl act together in the light response, although it is unclear whether as heteromultimers or distinct units. Also forms a functional cation channel with Trpgamma. Activated by fatty acids, metabolic stress, inositols and GTP-binding proteins. The sequence is that of Transient-receptor-potential-like protein (trpl) from Drosophila melanogaster (Fruit fly).